We begin with the raw amino-acid sequence, 353 residues long: Photosystem II D2 protein (353 aa).

T2 bears the N-acetylthreonine mark. At T2 the chain carries Phosphothreonine. A helical transmembrane segment spans residues 41 to 61 (CAYFAVGGWFTGTTFVTSWYT). H118 is a binding site for chlorophyll a. The helical transmembrane segment at 125-141 (GFMLRQFELARSVQLRP) threads the bilayer. The pheophytin a site is built by Q130 and N143. Residues 153-166 (VFVSVFLIYPLGQS) form a helical membrane-spanning segment. H198 lines the chlorophyll a pocket. Residues 208-228 (AALLCAIHGATVENTLFEDGD) traverse the membrane as a helical segment. Positions 215 and 262 each coordinate a plastoquinone. H215 is a binding site for Fe cation. Fe cation is bound at residue H269. Residues 279-295 (GLWMSALGVVGLALNLR) form a helical membrane-spanning segment.

It belongs to the reaction center PufL/M/PsbA/D family. As to quaternary structure, PSII is composed of 1 copy each of membrane proteins PsbA, PsbB, PsbC, PsbD, PsbE, PsbF, PsbH, PsbI, PsbJ, PsbK, PsbL, PsbM, PsbT, PsbX, PsbY, PsbZ, Psb30/Ycf12, at least 3 peripheral proteins of the oxygen-evolving complex and a large number of cofactors. It forms dimeric complexes. The D1/D2 heterodimer binds P680, chlorophylls that are the primary electron donor of PSII, and subsequent electron acceptors. It shares a non-heme iron and each subunit binds pheophytin, quinone, additional chlorophylls, carotenoids and lipids. There is also a Cl(-1) ion associated with D1 and D2, which is required for oxygen evolution. The PSII complex binds additional chlorophylls, carotenoids and specific lipids. is required as a cofactor.

Its subcellular location is the plastid. The protein localises to the chloroplast thylakoid membrane. The catalysed reaction is 2 a plastoquinone + 4 hnu + 2 H2O = 2 a plastoquinol + O2. Functionally, photosystem II (PSII) is a light-driven water:plastoquinone oxidoreductase that uses light energy to abstract electrons from H(2)O, generating O(2) and a proton gradient subsequently used for ATP formation. It consists of a core antenna complex that captures photons, and an electron transfer chain that converts photonic excitation into a charge separation. The D1/D2 (PsbA/PsbD) reaction center heterodimer binds P680, the primary electron donor of PSII as well as several subsequent electron acceptors. D2 is needed for assembly of a stable PSII complex. The protein is Photosystem II D2 protein of Jasminum nudiflorum (Winter jasmine).